The following is a 221-amino-acid chain: ATP-dependent dethiobiotin synthetase BioD (221 aa).

12–17 contributes to the ATP binding site; it reads EVGKTV. A Mg(2+)-binding site is contributed by T16. K39 is a catalytic residue. T43 contributes to the substrate binding site. ATP contacts are provided by residues D47, 105 to 108, and 165 to 166; these read EGLG and SC. The Mg(2+) site is built by D47 and E105.

Belongs to the dethiobiotin synthetase family. In terms of assembly, homodimer. The cofactor is Mg(2+).

It is found in the cytoplasm. It catalyses the reaction (7R,8S)-7,8-diammoniononanoate + CO2 + ATP = (4R,5S)-dethiobiotin + ADP + phosphate + 3 H(+). The catalysed reaction is (7R,8S)-8-amino-7-(carboxyamino)nonanoate + ATP = (4R,5S)-dethiobiotin + ADP + phosphate + H(+). Its pathway is cofactor biosynthesis; biotin biosynthesis; biotin from 7,8-diaminononanoate: step 1/2. Its function is as follows. Catalyzes a mechanistically unusual reaction, the ATP-dependent insertion of CO2 between the N7 and N8 nitrogen atoms of 7,8-diaminopelargonic acid (DAPA, also called 7,8-diammoniononanoate) to form a ureido ring. This cyanobacterium does not encode bioA (which catalyzes the formation of the precursor for this reaction in the cannonical pathway), instead it encodes bioU, which replaces bioA and also performs the first half of the cannonical BioD reaction. Thus in this organism BioD has a different substrate. This is ATP-dependent dethiobiotin synthetase BioD from Crocosphaera subtropica (strain ATCC 51142 / BH68) (Cyanothece sp. (strain ATCC 51142)).